The sequence spans 982 residues: Chromosome partition protein Smc (982 aa).

Position 33 to 40 (33 to 40 (PNGSGKSN)) interacts with ATP. Coiled coils occupy residues 171 to 231 (RYTK…ELAV), 280 to 310 (SADMQSNELQKELQDIYQKINELEQRKVIID), and 337 to 377 (QTQL…QIEK). The SMC hinge domain maps to 416–535 (TGILNTLGTF…AKDLNSAINL (120 aa)). Coiled-coil stretches lie at residues 575-718 (SASL…SARE) and 753-822 (VKLS…IASN).

Belongs to the SMC family. As to quaternary structure, homodimer.

It localises to the cytoplasm. Functionally, required for chromosome condensation and partitioning. In Mycoplasma genitalium (strain ATCC 33530 / DSM 19775 / NCTC 10195 / G37) (Mycoplasmoides genitalium), this protein is Chromosome partition protein Smc.